Reading from the N-terminus, the 166-residue chain is Lipoprotein signal peptidase (166 aa).

The next 3 helical transmembrane spans lie at 10–30 (LIWL…KAWV), 68–88 (WQLW…AFWL), and 94–114 (GHWR…GNVI). Active-site residues include aspartate 124 and aspartate 142. The chain crosses the membrane as a helical span at residues 138–158 (FNIADSAIVGGAIGIAVFGLF).

It belongs to the peptidase A8 family.

Its subcellular location is the cell inner membrane. The enzyme catalyses Release of signal peptides from bacterial membrane prolipoproteins. Hydrolyzes -Xaa-Yaa-Zaa-|-(S,diacylglyceryl)Cys-, in which Xaa is hydrophobic (preferably Leu), and Yaa (Ala or Ser) and Zaa (Gly or Ala) have small, neutral side chains.. It functions in the pathway protein modification; lipoprotein biosynthesis (signal peptide cleavage). Functionally, this protein specifically catalyzes the removal of signal peptides from prolipoproteins. This Xanthomonas oryzae pv. oryzae (strain MAFF 311018) protein is Lipoprotein signal peptidase.